The primary structure comprises 110 residues: Hydrogenase maturation factor HypA (110 aa).

H2 is a Ni(2+) binding site. C70, C73, C86, and C89 together coordinate Zn(2+).

Belongs to the HypA/HybF family.

Its function is as follows. Involved in the maturation of [NiFe] hydrogenases. Required for nickel insertion into the metal center of the hydrogenase. In Geobacter sp. (strain M21), this protein is Hydrogenase maturation factor HypA.